The sequence spans 595 residues: Neuroepithelial cell-transforming gene 1 protein (595 aa).

Met1 is modified (N-acetylmethionine). A disordered region spans residues 1 to 42 (MEPEPAAQKQPRPRRRSRRVSMLSEEPAAGLPADTPGPAANE). The tract at residues 1–74 (MEPEPAAQKQ…LKRKRREKDD (74 aa)) is necessary for nuclear localization. Positions 12–19 (RPRRRSRR) match the Nuclear localization signal motif. Ser21 carries the phosphoserine modification. Residues 66–72 (KRKRREK) carry the Nuclear localization signal motif. Phosphoserine is present on residues Ser100, Ser106, and Ser122. Residues 127–151 (GDHRSPASAQKSFSRSTVPTPTKRR) are disordered. Over residues 133–146 (ASAQKSFSRSTVPT) the composition is skewed to polar residues. Residues 174–356 (KRQEAIYELS…QGVLSDINLK (183 aa)) enclose the DH domain. A PH domain is found at 386–501 (VLLCHGELKN…WFNCIRAAIA (116 aa)). The residue at position 508 (Ser508) is a Phosphoserine. A disordered region spans residues 555–595 (CGSSVQTVEDTRNMKAQRPQPGLRRARDKAQSGGKKKETLV).

As to quaternary structure, interacts with RHOA in its GTP- and GDP-bound states, and with CDC42 in its GTP-bound state. Interacts with the PDZ 1 domain of BAIAP1.

It localises to the cytoplasm. The protein resides in the nucleus. Functionally, acts as a guanine nucleotide exchange factor (GEF) for RhoA GTPase. May be involved in activation of the SAPK/JNK pathway. Stimulates genotoxic stress-induced RHOB activity in breast cancer cells leading to their cell death. This Mus musculus (Mouse) protein is Neuroepithelial cell-transforming gene 1 protein (Net1).